We begin with the raw amino-acid sequence, 150 residues long: Histone H2B.2 (150 aa).

Basic and acidic residues predominate over residues 1 to 16 (MAPKAEKKPAAKKPAE). A disordered region spans residues 1–57 (MAPKAEKKPAAKKPAEEEPAAEKAPAGKKPKAEKRVPAGKSAGKEGGEGKRGRKKGK). Residues Lys-7 and Lys-34 each carry the N6-acetyllysine modification. Residue Lys-146 forms a Glycyl lysine isopeptide (Lys-Gly) (interchain with G-Cter in ubiquitin) linkage.

It belongs to the histone H2B family. As to quaternary structure, the nucleosome is a histone octamer containing two molecules each of H2A, H2B, H3 and H4 assembled in one H3-H4 heterotetramer and two H2A-H2B heterodimers. The octamer wraps approximately 147 bp of DNA. Can be acetylated to form H2BK6ac and H2BK33ac. In terms of processing, monoubiquitinated to form H2BK143ub1; may give a specific tag for epigenetic transcriptional activation.

The protein resides in the nucleus. It is found in the chromosome. In terms of biological role, core component of nucleosome. Nucleosomes wrap and compact DNA into chromatin, limiting DNA accessibility to the cellular machineries which require DNA as a template. Histones thereby play a central role in transcription regulation, DNA repair, DNA replication and chromosomal stability. DNA accessibility is regulated via a complex set of post-translational modifications of histones, also called histone code, and nucleosome remodeling. The polypeptide is Histone H2B.2 (Zea mays (Maize)).